The following is a 295-amino-acid chain: Structure-specific endonuclease subunit SLX1 (295 aa).

The region spanning 11 to 93 is the GIY-YIG domain; that stretch reads EFYGVYILQS…QHPKTSRHMA (83 aa). The interval 85 to 133 is disordered; that stretch reads HPKTSRHMAGGGGSVTATAETAKSAPVAGKSDATSPAKNRRNAAPVARS. The segment at 205–272 adopts an SLX1-type zinc-finger fold; it reads CCLCSDAIDY…IPSDVSCSQC (68 aa).

This sequence belongs to the SLX1 family. In terms of assembly, forms a heterodimer with SLX4. Requires a divalent metal cation as cofactor.

The protein resides in the nucleus. Functionally, catalytic subunit of the SLX1-SLX4 structure-specific endonuclease that resolves DNA secondary structures generated during DNA repair and recombination. Has endonuclease activity towards branched DNA substrates, introducing single-strand cuts in duplex DNA close to junctions with ss-DNA. This is Structure-specific endonuclease subunit SLX1 from Meyerozyma guilliermondii (strain ATCC 6260 / CBS 566 / DSM 6381 / JCM 1539 / NBRC 10279 / NRRL Y-324) (Yeast).